The sequence spans 123 residues: MPTIEQLVRKGRQAKPKKSKTLALKGSPLRRGVCTRVYTTTPKKPNSALRKVARVRLSSGIEVTAYIPGEGHNLQEHSIVLVRGGRVKDLPGVRYHIVRGALDTQGVKDRKQGRSLYGAKKAK.

The tract at residues 1 to 21 (MPTIEQLVRKGRQAKPKKSKT) is disordered. The segment covering 9-20 (RKGRQAKPKKSK) has biased composition (basic residues).

The protein belongs to the universal ribosomal protein uS12 family. In terms of assembly, part of the 30S ribosomal subunit. Contacts proteins S8 and S17. May interact with IF1 in the 30S initiation complex.

In terms of biological role, with S4 and S5 plays an important role in translational accuracy. Functionally, interacts with and stabilizes bases of the 16S rRNA that are involved in tRNA selection in the A site and with the mRNA backbone. Located at the interface of the 30S and 50S subunits, it traverses the body of the 30S subunit contacting proteins on the other side and probably holding the rRNA structure together. The combined cluster of proteins S8, S12 and S17 appears to hold together the shoulder and platform of the 30S subunit. This chain is Small ribosomal subunit protein uS12, found in Bifidobacterium longum (strain NCC 2705).